Consider the following 159-residue polypeptide: NADH-quinone oxidoreductase subunit B (159 aa).

[4Fe-4S] cluster contacts are provided by cysteine 32, cysteine 33, cysteine 97, and cysteine 126.

This sequence belongs to the complex I 20 kDa subunit family. In terms of assembly, NDH-1 is composed of 14 different subunits. Subunits NuoB, C, D, E, F, and G constitute the peripheral sector of the complex. Requires [4Fe-4S] cluster as cofactor.

It localises to the cell inner membrane. The catalysed reaction is a quinone + NADH + 5 H(+)(in) = a quinol + NAD(+) + 4 H(+)(out). Its function is as follows. NDH-1 shuttles electrons from NADH, via FMN and iron-sulfur (Fe-S) centers, to quinones in the respiratory chain. The immediate electron acceptor for the enzyme in this species is believed to be ubiquinone. Couples the redox reaction to proton translocation (for every two electrons transferred, four hydrogen ions are translocated across the cytoplasmic membrane), and thus conserves the redox energy in a proton gradient. This Helicobacter pylori (strain HPAG1) protein is NADH-quinone oxidoreductase subunit B.